The following is a 177-amino-acid chain: Large ribosomal subunit protein uL6 (177 aa).

Positions 151–177 are disordered; that stretch reads YRPPEPYKGKGIRYSDEHVVRKEAKKK. Basic and acidic residues predominate over residues 155–177; it reads EPYKGKGIRYSDEHVVRKEAKKK.

The protein belongs to the universal ribosomal protein uL6 family. Part of the 50S ribosomal subunit.

In terms of biological role, this protein binds to the 23S rRNA, and is important in its secondary structure. It is located near the subunit interface in the base of the L7/L12 stalk, and near the tRNA binding site of the peptidyltransferase center. The sequence is that of Large ribosomal subunit protein uL6 from Psychrobacter sp. (strain PRwf-1).